The following is a 142-amino-acid chain: Transcriptional regulator MraZ (142 aa).

SpoVT-AbrB domains are found at residues 5–51 (ASAL…PRPE) and 77–120 (AMDV…DAQT).

This sequence belongs to the MraZ family. In terms of assembly, forms oligomers.

The protein localises to the cytoplasm. It localises to the nucleoid. The sequence is that of Transcriptional regulator MraZ from Paraburkholderia phytofirmans (strain DSM 17436 / LMG 22146 / PsJN) (Burkholderia phytofirmans).